The sequence spans 140 residues: Nucleoside diphosphate kinase (140 aa).

Residues Lys-11, Phe-59, Arg-87, Thr-93, Arg-104, and Asn-114 each contribute to the ATP site. The Pros-phosphohistidine intermediate role is filled by His-117.

The protein belongs to the NDK family. As to quaternary structure, homotetramer. The cofactor is Mg(2+).

The protein localises to the cytoplasm. The enzyme catalyses a 2'-deoxyribonucleoside 5'-diphosphate + ATP = a 2'-deoxyribonucleoside 5'-triphosphate + ADP. It carries out the reaction a ribonucleoside 5'-diphosphate + ATP = a ribonucleoside 5'-triphosphate + ADP. Its function is as follows. Major role in the synthesis of nucleoside triphosphates other than ATP. The ATP gamma phosphate is transferred to the NDP beta phosphate via a ping-pong mechanism, using a phosphorylated active-site intermediate. The sequence is that of Nucleoside diphosphate kinase from Roseobacter denitrificans (strain ATCC 33942 / OCh 114) (Erythrobacter sp. (strain OCh 114)).